The following is a 459-amino-acid chain: Vanillin aminotransferase (459 aa).

Residues 115-116 (GS) and Asp255 contribute to the pyridoxal 5'-phosphate site. The residue at position 284 (Lys284) is an N6-(pyridoxal phosphate)lysine. Residue 320 to 321 (FT) participates in pyridoxal 5'-phosphate binding. Positions 430–457 (LEELDELIRIYGKALKDTEKRVEELKSQ) form a coiled coil.

It belongs to the class-III pyridoxal-phosphate-dependent aminotransferase family. Confined to the placenta of green fruits at high levels. Barely detectable in the pericarp and seeds as well as in the placenta of mature fruits.

It catalyses the reaction vanillin + L-alanine = vanillylamine + pyruvate. It participates in aromatic compound metabolism; phenylpropanoid biosynthesis. Functionally, involved in the biosynthesis of capsaicinoids natural products, pungent alkaloids synthesized from phenylpropanoid intermediates in the placental tissue of chili pepper fruit acting as repellant on herbivorous mammals and conferring spiciness to hot peppers. Can transfer an amine from vanillylamine to pyruvate forming vanillin and L-alanine. This chain is Vanillin aminotransferase, found in Capsicum annuum (Capsicum pepper).